A 191-amino-acid chain; its full sequence is Photosystem I assembly protein Ycf4 (191 aa).

A run of 2 helical transmembrane segments spans residues 34-54 (VASM…SSYF) and 68-88 (IFVP…LLAI).

The protein belongs to the Ycf4 family.

It is found in the cellular thylakoid membrane. Functionally, seems to be required for the assembly of the photosystem I complex. This is Photosystem I assembly protein Ycf4 from Prochlorococcus marinus (strain NATL2A).